Reading from the N-terminus, the 367-residue chain is Alpha-2-HS-glycoprotein (367 aa).

The signal sequence occupies residues 1-18 (MKSLVLLLCLAQLWGCHS). A Cystatin fetuin-A-type 1 domain is found at 27-133 (YRQPNCDDPE…KFSVVYAKCD (107 aa)). Cystine bridges form between C32–C358, C89–C100, C114–C132, C146–C149, C208–C219, and C230–C247. Phosphoserine is present on residues S134, S135, and S138. The Cystatin fetuin-A-type 2 domain maps to 144–255 (KVCQDCPLLA…TCTVFQTQPV (112 aa)). N156 and N176 each carry an N-linked (GlcNAc...) asparagine glycan. Residues 254–301 (PVTSQPQPEGANETVPTPVVDPDAPPSPPLGAPGLPPAGSPPDSHVLL) form a disordered region. N-linked (GlcNAc...) asparagine glycosylation is present at N265. Pro residues predominate over residues 276–293 (DAPPSPPLGAPGLPPAGS). Residues 301–340 (LAAPPGHQLHWAHYDLRHTFMGVVSLGSPSGEASHPRKTR) constitute a propeptide, connecting peptide. T319 carries the phosphothreonine modification. 3 positions are modified to phosphoserine: S325, S328, and S330. Residue T339 is glycosylated (O-linked (GalNAc...) threonine).

The protein belongs to the fetuin family. In terms of assembly, alpha-2-HS glycoprotein derives from this precursor, when the connecting peptide is cleaved off. The two chains A and B are held together by a single disulfide bond. Phosphorylated by FAM20C in the extracellular medium.

The protein resides in the secreted. Its function is as follows. Promotes endocytosis, possesses opsonic properties and influences the mineral phase of bone. Shows affinity for calcium and barium ions. The chain is Alpha-2-HS-glycoprotein (AHSG) from Pan troglodytes (Chimpanzee).